Reading from the N-terminus, the 253-residue chain is MRLTVELIQNSLSYINPLKDRELDLRGHKIPTIENLGIAKDQDAIDFTDNDISSLGNFPFFPRLHTLLLARNRVKHIQPTIASTIPNLTTLVLTANNMAELADLDPLRNLTRLTHLVLLENPVTRKEHYRYWVIWRIPSVRFLDYQKVKDAERAKAKELFGTAEEPTALASKIMGIKSRTFDVPSGGAERAPADKAVRVKLTEKERKRVEKMIREARSLQEITRLEKELNEGRIPGGALDAGEDSEDENQMQT.

4 LRR repeats span residues 19–40 (KDRE…GIAK), 41–62 (DQDA…PFFP), 63–84 (RLHT…IAST), and 87–108 (NLTT…DPLR). One can recognise an LRRCT domain in the interval 121–159 (NPVTRKEHYRYWVIWRIPSVRFLDYQKVKDAERAKAKEL). Residues 228–253 (ELNEGRIPGGALDAGEDSEDENQMQT) are disordered. Positions 241–253 (AGEDSEDENQMQT) are enriched in acidic residues.

It belongs to the U2 small nuclear ribonucleoprotein A family. Associated with the spliceosome.

The protein localises to the nucleus. In terms of biological role, involved in pre-mRNA splicing. The chain is U2 small nuclear ribonucleoprotein A' (lea1) from Aspergillus fumigatus (strain ATCC MYA-4609 / CBS 101355 / FGSC A1100 / Af293) (Neosartorya fumigata).